The sequence spans 369 residues: 3,7-dimethylxanthine N-methyltransferase TCS1 (369 aa).

Tyr24 provides a ligand contact to S-adenosyl-L-homocysteine. Thr31 serves as a coordination point for caffeine. The S-adenosyl-L-homocysteine site is built by Cys66, Asn71, Asp103, Leu104, Ser138, and Phe139. Residues Tyr156, His159, and Trp160 each coordinate caffeine. A Mg(2+)-binding site is contributed by Asn177. Arg225 contributes to the caffeine binding site. Positions 263, 265, and 266 each coordinate Mg(2+). A caffeine-binding site is contributed by Phe321.

This sequence belongs to the methyltransferase superfamily. Type-7 methyltransferase family. The cofactor is Mg(2+).

The enzyme catalyses 1,7-dimethylxanthine + S-adenosyl-L-methionine = caffeine + S-adenosyl-L-homocysteine + H(+). It catalyses the reaction theobromine + S-adenosyl-L-methionine = caffeine + S-adenosyl-L-homocysteine + H(+). The catalysed reaction is 7-methylxanthine + S-adenosyl-L-methionine = theobromine + S-adenosyl-L-homocysteine + H(+). The protein operates within alkaloid biosynthesis. In terms of biological role, involved in the biosynthesis of caffeine in cv. Puer. Involved in the biosynthesis of theacrine in cv. Kucha, a caffeine-like xanthine alkaloid with diverse beneficial biological activities including anti-depressive, sedative, and hypnotic activities, improving learning and memory, increasing exercise activity, and preventing nonalcoholic fatty liver disease. Catalyzes the conversion of 7-methylxanthine (7mX) to theobromine and of theobromine to caffeine. Has 3-N- and 1-N-methylation activity. This chain is 3,7-dimethylxanthine N-methyltransferase TCS1, found in Camellia sinensis var. assamica (Assam tea).